A 469-amino-acid polypeptide reads, in one-letter code: Trigger factor (469 aa).

Residues 165 to 250 form the PPIase FKBP-type domain; the sequence is GDCVTIDYLG…VKAISKPDEL (86 aa). Over residues 439 to 460 the composition is skewed to basic and acidic residues; it reads EYDESDLTEKKPEKKKGVEKTP. The interval 439–469 is disordered; it reads EYDESDLTEKKPEKKKGVEKTPIRKKAPKKG.

Belongs to the FKBP-type PPIase family. Tig subfamily.

Its subcellular location is the cytoplasm. It catalyses the reaction [protein]-peptidylproline (omega=180) = [protein]-peptidylproline (omega=0). In terms of biological role, involved in protein export. Acts as a chaperone by maintaining the newly synthesized protein in an open conformation. Functions as a peptidyl-prolyl cis-trans isomerase. The chain is Trigger factor from Bartonella quintana (strain Toulouse) (Rochalimaea quintana).